Consider the following 179-residue polypeptide: Large ribosomal subunit protein uL6 (179 aa).

This sequence belongs to the universal ribosomal protein uL6 family. As to quaternary structure, part of the 50S ribosomal subunit.

This protein binds to the 23S rRNA, and is important in its secondary structure. It is located near the subunit interface in the base of the L7/L12 stalk, and near the tRNA binding site of the peptidyltransferase center. This Prochlorococcus marinus (strain MIT 9312) protein is Large ribosomal subunit protein uL6.